A 251-amino-acid polypeptide reads, in one-letter code: Triosephosphate isomerase (251 aa).

Position 8–10 (8–10 (NWK)) interacts with substrate. His97 acts as the Electrophile in catalysis. The Proton acceptor role is filled by Glu170. Substrate-binding positions include Gly176, Ser215, and 236–237 (GG).

The protein belongs to the triosephosphate isomerase family. As to quaternary structure, homodimer.

It is found in the cytoplasm. It carries out the reaction D-glyceraldehyde 3-phosphate = dihydroxyacetone phosphate. It participates in carbohydrate biosynthesis; gluconeogenesis. It functions in the pathway carbohydrate degradation; glycolysis; D-glyceraldehyde 3-phosphate from glycerone phosphate: step 1/1. In terms of biological role, involved in the gluconeogenesis. Catalyzes stereospecifically the conversion of dihydroxyacetone phosphate (DHAP) to D-glyceraldehyde-3-phosphate (G3P). This is Triosephosphate isomerase from Nitratidesulfovibrio vulgaris (strain ATCC 29579 / DSM 644 / CCUG 34227 / NCIMB 8303 / VKM B-1760 / Hildenborough) (Desulfovibrio vulgaris).